Here is a 282-residue protein sequence, read N- to C-terminus: Elongation factor Ts (282 aa).

An involved in Mg(2+) ion dislocation from EF-Tu region spans residues 80–83; that stretch reads TDFV.

Belongs to the EF-Ts family.

Its subcellular location is the cytoplasm. Associates with the EF-Tu.GDP complex and induces the exchange of GDP to GTP. It remains bound to the aminoacyl-tRNA.EF-Tu.GTP complex up to the GTP hydrolysis stage on the ribosome. This chain is Elongation factor Ts, found in Chlamydia trachomatis serovar L2b (strain UCH-1/proctitis).